We begin with the raw amino-acid sequence, 186 residues long: RNA-free ribonuclease P (186 aa).

This sequence belongs to the HARP family.

It carries out the reaction Endonucleolytic cleavage of RNA, removing 5'-extranucleotides from tRNA precursor.. In terms of biological role, RNA-free RNase P that catalyzes the removal of the 5'-leader sequence from pre-tRNA to produce the mature 5'-terminus. This is RNA-free ribonuclease P from Hydrogenobaculum sp. (strain Y04AAS1).